The primary structure comprises 463 residues: NADH-quinone oxidoreductase subunit N (463 aa).

The next 14 helical transmembrane spans lie at 2–22 (NTLI…ILNF), 25–45 (GIVP…FYEF), 61–81 (FSTA…ALSH), 91–110 (ISDF…AMVS), 114–133 (LAMF…VLAA), 149–169 (FLMG…IYGA), 189–209 (IWFP…IAAV), 223–243 (PALT…ATLF), 264–284 (FTNV…IMAL), 292–312 (MLAF…LTIA), 317–337 (VLLY…SVIL), 362–382 (AAIL…SGFF), 395–415 (GYVA…GYYF), and 434–454 (PFLI…LGLF).

This sequence belongs to the complex I subunit 2 family. In terms of assembly, NDH-1 is composed of 14 different subunits. Subunits NuoA, H, J, K, L, M, N constitute the membrane sector of the complex.

Its subcellular location is the cell inner membrane. The enzyme catalyses a quinone + NADH + 5 H(+)(in) = a quinol + NAD(+) + 4 H(+)(out). In terms of biological role, NDH-1 shuttles electrons from NADH, via FMN and iron-sulfur (Fe-S) centers, to quinones in the respiratory chain. The immediate electron acceptor for the enzyme in this species is believed to be a menaquinone. Couples the redox reaction to proton translocation (for every two electrons transferred, four hydrogen ions are translocated across the cytoplasmic membrane), and thus conserves the redox energy in a proton gradient. The polypeptide is NADH-quinone oxidoreductase subunit N (Flavobacterium johnsoniae (strain ATCC 17061 / DSM 2064 / JCM 8514 / BCRC 14874 / CCUG 350202 / NBRC 14942 / NCIMB 11054 / UW101) (Cytophaga johnsonae)).